A 181-amino-acid polypeptide reads, in one-letter code: Adenine phosphoribosyltransferase (181 aa).

This sequence belongs to the purine/pyrimidine phosphoribosyltransferase family. In terms of assembly, homodimer.

The protein localises to the cytoplasm. It catalyses the reaction AMP + diphosphate = 5-phospho-alpha-D-ribose 1-diphosphate + adenine. Its pathway is purine metabolism; AMP biosynthesis via salvage pathway; AMP from adenine: step 1/1. Functionally, catalyzes a salvage reaction resulting in the formation of AMP, that is energically less costly than de novo synthesis. This Chelativorans sp. (strain BNC1) protein is Adenine phosphoribosyltransferase.